The chain runs to 288 residues: Bifunctional protein FolD (288 aa).

NADP(+)-binding positions include 168 to 170 (GRG), T195, and V236.

Belongs to the tetrahydrofolate dehydrogenase/cyclohydrolase family. As to quaternary structure, homodimer.

The enzyme catalyses (6R)-5,10-methylene-5,6,7,8-tetrahydrofolate + NADP(+) = (6R)-5,10-methenyltetrahydrofolate + NADPH. The catalysed reaction is (6R)-5,10-methenyltetrahydrofolate + H2O = (6R)-10-formyltetrahydrofolate + H(+). It participates in one-carbon metabolism; tetrahydrofolate interconversion. Its function is as follows. Catalyzes the oxidation of 5,10-methylenetetrahydrofolate to 5,10-methenyltetrahydrofolate and then the hydrolysis of 5,10-methenyltetrahydrofolate to 10-formyltetrahydrofolate. In Mycobacterium sp. (strain JLS), this protein is Bifunctional protein FolD.